Here is a 764-residue protein sequence, read N- to C-terminus: Acylamino-acid-releasing enzyme (764 aa).

Residues Ser-618, Asp-707, and His-739 each act as charge relay system in the active site.

The protein belongs to the peptidase S9C family. Homotetramer.

The protein resides in the cytoplasm. Its subcellular location is the nucleus. It catalyses the reaction Cleavage of an N-acetyl or N-formyl amino acid from the N-terminus of a polypeptide.. With respect to regulation, strongly inhibited by the serine protease inhibitor diisopropyl fluorophosphate. Its function is as follows. Catalyzes the hydrolysis of the N-terminal peptide bond of an N-acetylated peptide to generate an N-acetylated amino acid and a peptide with a free N-terminus. Can degrade the glycated RuBisCO (ribulose-1,5-bisphosphate carboxylase/oxygenase) protein but not the native protein. May be involved in the elimination of glycated proteins. Plays a homeostatic role in sustaining the cytoplasmic antioxidative system. May contribute to the elimination of the oxidized proteins in the cytoplasm. The polypeptide is Acylamino-acid-releasing enzyme (Arabidopsis thaliana (Mouse-ear cress)).